The sequence spans 462 residues: Argininosuccinate lyase (462 aa).

Belongs to the lyase 1 family. Argininosuccinate lyase subfamily.

It localises to the cytoplasm. The enzyme catalyses 2-(N(omega)-L-arginino)succinate = fumarate + L-arginine. The protein operates within amino-acid biosynthesis; L-arginine biosynthesis; L-arginine from L-ornithine and carbamoyl phosphate: step 3/3. In Bacillus cereus (strain AH820), this protein is Argininosuccinate lyase.